Consider the following 677-residue polypeptide: Methionine--tRNA ligase (677 aa).

The 'HIGH' region motif lies at 15-25; it reads PYANGSIHLGH. 4 residues coordinate Zn(2+): Cys-146, Cys-149, Cys-159, and Cys-162. The 'KMSKS' region motif lies at 333–337; that stretch reads KMSKS. Lys-336 contacts ATP. One can recognise a tRNA-binding domain in the interval 575-677; sequence DFAKVDLRVA…DGAKPGQQVK (103 aa).

The protein belongs to the class-I aminoacyl-tRNA synthetase family. MetG type 1 subfamily. As to quaternary structure, homodimer. Zn(2+) is required as a cofactor.

The protein resides in the cytoplasm. It carries out the reaction tRNA(Met) + L-methionine + ATP = L-methionyl-tRNA(Met) + AMP + diphosphate. Is required not only for elongation of protein synthesis but also for the initiation of all mRNA translation through initiator tRNA(fMet) aminoacylation. The protein is Methionine--tRNA ligase of Salmonella arizonae (strain ATCC BAA-731 / CDC346-86 / RSK2980).